The following is a 151-amino-acid chain: Cyanate hydratase (151 aa).

Catalysis depends on residues Arg92, Glu95, and Ser118.

The protein belongs to the cyanase family.

It catalyses the reaction cyanate + hydrogencarbonate + 3 H(+) = NH4(+) + 2 CO2. Catalyzes the reaction of cyanate with bicarbonate to produce ammonia and carbon dioxide. The polypeptide is Cyanate hydratase (Coprinopsis cinerea (strain Okayama-7 / 130 / ATCC MYA-4618 / FGSC 9003) (Inky cap fungus)).